We begin with the raw amino-acid sequence, 1381 residues long: DNA-directed RNA polymerase subunit beta'' (1381 aa).

Zn(2+)-binding residues include Cys224, Cys296, Cys303, and Cys306.

It belongs to the RNA polymerase beta' chain family. RpoC2 subfamily. In plastids the minimal PEP RNA polymerase catalytic core is composed of four subunits: alpha, beta, beta', and beta''. When a (nuclear-encoded) sigma factor is associated with the core the holoenzyme is formed, which can initiate transcription. Requires Zn(2+) as cofactor.

The protein localises to the plastid. The protein resides in the chloroplast. It carries out the reaction RNA(n) + a ribonucleoside 5'-triphosphate = RNA(n+1) + diphosphate. DNA-dependent RNA polymerase catalyzes the transcription of DNA into RNA using the four ribonucleoside triphosphates as substrates. The polypeptide is DNA-directed RNA polymerase subunit beta'' (Drimys granadensis).